We begin with the raw amino-acid sequence, 166 residues long: Putative 4-hydroxy-4-methyl-2-oxoglutarate aldolase (166 aa).

Substrate is bound by residues 74–77 (GDQI) and R96. D97 is a binding site for a divalent metal cation.

Belongs to the class II aldolase/RraA-like family. Homotrimer. The cofactor is a divalent metal cation.

It carries out the reaction 4-hydroxy-4-methyl-2-oxoglutarate = 2 pyruvate. It catalyses the reaction oxaloacetate + H(+) = pyruvate + CO2. Its function is as follows. Catalyzes the aldol cleavage of 4-hydroxy-4-methyl-2-oxoglutarate (HMG) into 2 molecules of pyruvate. Also contains a secondary oxaloacetate (OAA) decarboxylase activity due to the common pyruvate enolate transition state formed following C-C bond cleavage in the retro-aldol and decarboxylation reactions. In Xanthomonas oryzae pv. oryzae (strain MAFF 311018), this protein is Putative 4-hydroxy-4-methyl-2-oxoglutarate aldolase.